The primary structure comprises 92 residues: DNA-directed RNA polymerase subunit omega (92 aa).

It belongs to the RNA polymerase subunit omega family. The RNAP catalytic core consists of 2 alpha, 1 beta, 1 beta' and 1 omega subunit. When a sigma factor is associated with the core the holoenzyme is formed, which can initiate transcription.

It carries out the reaction RNA(n) + a ribonucleoside 5'-triphosphate = RNA(n+1) + diphosphate. Functionally, promotes RNA polymerase assembly. Latches the N- and C-terminal regions of the beta' subunit thereby facilitating its interaction with the beta and alpha subunits. This Corynebacterium diphtheriae (strain ATCC 700971 / NCTC 13129 / Biotype gravis) protein is DNA-directed RNA polymerase subunit omega.